Reading from the N-terminus, the 64-residue chain is MRILYLLFSLLFLALQVSPGLSSPKRDMLFCKRGTCHFGRCPSHLIKVGSCFGFRSCCKWPWDA.

The first 28 residues, 1 to 28 (MRILYLLFSLLFLALQVSPGLSSPKRDM), serve as a signal peptide directing secretion. Cystine bridges form between Cys-31–Cys-57, Cys-36–Cys-51, and Cys-41–Cys-58.

As to expression, expressed in circulating heterophil granulocytes and bone marrow (at protein level).

Its subcellular location is the secreted. Its function is as follows. Antibacterial activity against the Gram-positive bacterium Staphylococcus aureus. Lacks antibacterial activity against the Gram-negative bacterium E.coli K-12. In Meleagris gallopavo (Wild turkey), this protein is Antimicrobial peptide THP2.